The primary structure comprises 91 residues: Probable Fe(2+)-trafficking protein (91 aa).

Belongs to the Fe(2+)-trafficking protein family. In terms of assembly, monomer.

In terms of biological role, could be a mediator in iron transactions between iron acquisition and iron-requiring processes, such as synthesis and/or repair of Fe-S clusters in biosynthetic enzymes. The chain is Probable Fe(2+)-trafficking protein from Escherichia coli O6:H1 (strain CFT073 / ATCC 700928 / UPEC).